The sequence spans 135 residues: Translation initiation factor 2 subunit beta (135 aa).

The protein belongs to the eIF-2-beta/eIF-5 family. In terms of assembly, heterotrimer composed of an alpha, a beta and a gamma chain.

EIF-2 functions in the early steps of protein synthesis by forming a ternary complex with GTP and initiator tRNA. The sequence is that of Translation initiation factor 2 subunit beta (eif2b) from Methanothermobacter thermautotrophicus (strain ATCC 29096 / DSM 1053 / JCM 10044 / NBRC 100330 / Delta H) (Methanobacterium thermoautotrophicum).